We begin with the raw amino-acid sequence, 397 residues long: MTTLLNPYFGEFGGMYVPQILMPALRQLEEAFVSAQKDPEFQAQFNDLLKNYAGRPTALTKCQNITAGTNTTLYLKREDLLHGGAHKTNQVLGQALLAKRMGKTEIIAETGAGQHGVASALASALLGLKCRIYMGAKDVERQSPNVFRMHLMGAEVIPVHSGSATLKDACNEALRDWSGSYETAHYMLGTAAGPHPYPTIVREFQRMIGEETKAQILEREGRLPDAVIACVGGGSNAIGMFADFINETDVGLIGVEPGGHGIETGEHGAPLKHGRVGIYFGMKAPMMQTEDGQIEESYSISAGLDFPSVGPQHAYLNSTGRADYVSITDDEALEAFKTLCLHEGIIPALESSHALAHALKMMRENPEKEQLLVVNLSGRGDKDIFTVHDILKARGEI.

An N6-(pyridoxal phosphate)lysine modification is found at lysine 87.

This sequence belongs to the TrpB family. As to quaternary structure, tetramer of two alpha and two beta chains. Pyridoxal 5'-phosphate serves as cofactor.

The enzyme catalyses (1S,2R)-1-C-(indol-3-yl)glycerol 3-phosphate + L-serine = D-glyceraldehyde 3-phosphate + L-tryptophan + H2O. Its pathway is amino-acid biosynthesis; L-tryptophan biosynthesis; L-tryptophan from chorismate: step 5/5. Its function is as follows. The beta subunit is responsible for the synthesis of L-tryptophan from indole and L-serine. The polypeptide is Tryptophan synthase beta chain (Escherichia coli O17:K52:H18 (strain UMN026 / ExPEC)).